The following is a 318-amino-acid chain: Transaldolase (318 aa).

The active-site Schiff-base intermediate with substrate is the Lys132.

It belongs to the transaldolase family. Type 1 subfamily. Homodimer.

The protein resides in the cytoplasm. The catalysed reaction is D-sedoheptulose 7-phosphate + D-glyceraldehyde 3-phosphate = D-erythrose 4-phosphate + beta-D-fructose 6-phosphate. It participates in carbohydrate degradation; pentose phosphate pathway; D-glyceraldehyde 3-phosphate and beta-D-fructose 6-phosphate from D-ribose 5-phosphate and D-xylulose 5-phosphate (non-oxidative stage): step 2/3. Functionally, transaldolase is important for the balance of metabolites in the pentose-phosphate pathway. The sequence is that of Transaldolase from Shewanella sp. (strain MR-4).